Consider the following 376-residue polypeptide: Biotin synthase (376 aa).

Positions 68–292 (NEVQISTLLS…IAVTRICCPS (225 aa)) constitute a Radical SAM core domain. Residues Cys-83, Cys-87, and Cys-90 each contribute to the [4Fe-4S] cluster site. [2Fe-2S] cluster contacts are provided by Cys-129, Cys-160, Cys-220, and Arg-296.

This sequence belongs to the radical SAM superfamily. Biotin synthase family. As to quaternary structure, homodimer. [4Fe-4S] cluster serves as cofactor. It depends on [2Fe-2S] cluster as a cofactor.

The enzyme catalyses (4R,5S)-dethiobiotin + (sulfur carrier)-SH + 2 reduced [2Fe-2S]-[ferredoxin] + 2 S-adenosyl-L-methionine = (sulfur carrier)-H + biotin + 2 5'-deoxyadenosine + 2 L-methionine + 2 oxidized [2Fe-2S]-[ferredoxin]. Its pathway is cofactor biosynthesis; biotin biosynthesis; biotin from 7,8-diaminononanoate: step 2/2. Catalyzes the conversion of dethiobiotin (DTB) to biotin by the insertion of a sulfur atom into dethiobiotin via a radical-based mechanism. The protein is Biotin synthase of Psychrobacter cryohalolentis (strain ATCC BAA-1226 / DSM 17306 / VKM B-2378 / K5).